Here is a 448-residue protein sequence, read N- to C-terminus: Probable glycine dehydrogenase (decarboxylating) subunit 1 (448 aa).

Belongs to the GcvP family. N-terminal subunit subfamily. As to quaternary structure, the glycine cleavage system is composed of four proteins: P, T, L and H. In this organism, the P 'protein' is a heterodimer of two subunits.

The catalysed reaction is N(6)-[(R)-lipoyl]-L-lysyl-[glycine-cleavage complex H protein] + glycine + H(+) = N(6)-[(R)-S(8)-aminomethyldihydrolipoyl]-L-lysyl-[glycine-cleavage complex H protein] + CO2. Its function is as follows. The glycine cleavage system catalyzes the degradation of glycine. The P protein binds the alpha-amino group of glycine through its pyridoxal phosphate cofactor; CO(2) is released and the remaining methylamine moiety is then transferred to the lipoamide cofactor of the H protein. The chain is Probable glycine dehydrogenase (decarboxylating) subunit 1 from Listeria welshimeri serovar 6b (strain ATCC 35897 / DSM 20650 / CCUG 15529 / CIP 8149 / NCTC 11857 / SLCC 5334 / V8).